A 360-amino-acid chain; its full sequence is 3-isopropylmalate dehydrogenase (360 aa).

NAD(+) is bound at residue 76–89; the sequence is GPKWDTIERDIRPE. 4 residues coordinate substrate: R96, R106, R134, and D224. 3 residues coordinate Mg(2+): D224, D248, and D252. 282–294 is an NAD(+) binding site; the sequence is GSAPDIAGKGIAN.

The protein belongs to the isocitrate and isopropylmalate dehydrogenases family. LeuB type 1 subfamily. As to quaternary structure, homodimer. Requires Mg(2+) as cofactor. Mn(2+) serves as cofactor.

The protein resides in the cytoplasm. The enzyme catalyses (2R,3S)-3-isopropylmalate + NAD(+) = 4-methyl-2-oxopentanoate + CO2 + NADH. The protein operates within amino-acid biosynthesis; L-leucine biosynthesis; L-leucine from 3-methyl-2-oxobutanoate: step 3/4. Catalyzes the oxidation of 3-carboxy-2-hydroxy-4-methylpentanoate (3-isopropylmalate) to 3-carboxy-4-methyl-2-oxopentanoate. The product decarboxylates to 4-methyl-2 oxopentanoate. This is 3-isopropylmalate dehydrogenase from Pseudomonas savastanoi pv. phaseolicola (strain 1448A / Race 6) (Pseudomonas syringae pv. phaseolicola (strain 1448A / Race 6)).